Here is a 678-residue protein sequence, read N- to C-terminus: Secretin ExeD (678 aa).

The N-terminal stretch at 1 to 25 (MINKGKGWRLATVAAALMMAGSAWA) is a signal peptide. The tract at residues 26 to 122 (TEYSASFKNA…VVDETNPGIG (97 aa)) is N0. Positions 124 to 188 (EMVTRVVPVR…EVVRRVDKAG (65 aa)) are N1. The interval 189-264 (DQEVDIIKLK…MVRQLDRDLQ (76 aa)) is N2. Residues 267–348 (GNTRVFYLKY…ELEQVVAKLD (82 aa)) form an N3 region. A secretin region spans residues 353–602 (QVLVEAIIVE…VFIRPTILRD (250 aa)). Positions 604–678 (NVYSGISSNK…GVQPFVQGNK (75 aa)) are s domain.

It belongs to the bacterial secretin family. GSP D subfamily. As to quaternary structure, forms a cylindrical channel with 15 subunits.

It is found in the cell outer membrane. Functionally, involved in a type II secretion system (T2SS, formerly general secretion pathway, GSP) for the export of proteins. This subunit forms the outer membrane channel. This is Secretin ExeD (exeD) from Aeromonas hydrophila.